We begin with the raw amino-acid sequence, 129 residues long: Small ribosomal subunit protein uS9 (129 aa).

It belongs to the universal ribosomal protein uS9 family.

This chain is Small ribosomal subunit protein uS9 (rpsI), found in Treponema pallidum (strain Nichols).